Reading from the N-terminus, the 457-residue chain is Tubulin beta chain (457 aa).

Glutamine 11, glutamate 69, serine 138, glycine 142, threonine 143, glycine 144, asparagine 204, and asparagine 226 together coordinate GTP. A Mg(2+)-binding site is contributed by glutamate 69. The interval 431–457 is disordered; it reads EGEEEEDAYAEGAVVNGDQSYEDQYAA.

It belongs to the tubulin family. As to quaternary structure, dimer of alpha and beta chains. A typical microtubule is a hollow water-filled tube with an outer diameter of 25 nm and an inner diameter of 15 nM. Alpha-beta heterodimers associate head-to-tail to form protofilaments running lengthwise along the microtubule wall with the beta-tubulin subunit facing the microtubule plus end conferring a structural polarity. Microtubules usually have 13 protofilaments but different protofilament numbers can be found in some organisms and specialized cells. Requires Mg(2+) as cofactor.

Its subcellular location is the cytoplasm. It localises to the cytoskeleton. Tubulin is the major constituent of microtubules, a cylinder consisting of laterally associated linear protofilaments composed of alpha- and beta-tubulin heterodimers. Microtubules grow by the addition of GTP-tubulin dimers to the microtubule end, where a stabilizing cap forms. Below the cap, tubulin dimers are in GDP-bound state, owing to GTPase activity of alpha-tubulin. The sequence is that of Tubulin beta chain (TUBB1) from Porphyra purpurea (Red seaweed).